A 354-amino-acid polypeptide reads, in one-letter code: MRVTDFSFELPESLIAHYPQPERSRCRLLSLEGPTGALTHGTFTDLLDKLNPGDLLVFNNTRVIPARLFGRKASGGKIEVLVERMLDDKRILAHIRASKAPKPGTELLLGDDESIHATMTARHGALFEVEFNDPRPVLDILNAIGHMPLPPYIDRPDEDADRELYQTVYSEKPGAVAAPTAGLHFDEPLLAALREKGVEMAFVTLHVGAGTFQPVRVDTIEDHIMHSEYAEVPQEVVDAVLAAKARGNRVIAVGTTSVRSLESAAQAAKSDLIEPFFGDTQIFIYPGYQYKVIDALITNFHLPESTLIMLVSAFAGYQHTMNAYKTAVEQKYRFFSYGDAMFITYNPRAISERP.

This sequence belongs to the QueA family. As to quaternary structure, monomer.

It localises to the cytoplasm. It catalyses the reaction 7-aminomethyl-7-carbaguanosine(34) in tRNA + S-adenosyl-L-methionine = epoxyqueuosine(34) in tRNA + adenine + L-methionine + 2 H(+). It functions in the pathway tRNA modification; tRNA-queuosine biosynthesis. Its function is as follows. Transfers and isomerizes the ribose moiety from AdoMet to the 7-aminomethyl group of 7-deazaguanine (preQ1-tRNA) to give epoxyqueuosine (oQ-tRNA). This chain is S-adenosylmethionine:tRNA ribosyltransferase-isomerase, found in Salmonella paratyphi A (strain ATCC 9150 / SARB42).